Reading from the N-terminus, the 86-residue chain is Putative membrane protein insertion efficiency factor (86 aa).

This sequence belongs to the UPF0161 family.

It is found in the cell inner membrane. Functionally, could be involved in insertion of integral membrane proteins into the membrane. This is Putative membrane protein insertion efficiency factor from Mannheimia succiniciproducens (strain KCTC 0769BP / MBEL55E).